The following is a 306-amino-acid chain: Homoserine kinase (306 aa).

Proline 88–threonine 98 provides a ligand contact to ATP.

It belongs to the GHMP kinase family. Homoserine kinase subfamily.

Its subcellular location is the cytoplasm. It catalyses the reaction L-homoserine + ATP = O-phospho-L-homoserine + ADP + H(+). It functions in the pathway amino-acid biosynthesis; L-threonine biosynthesis; L-threonine from L-aspartate: step 4/5. Functionally, catalyzes the ATP-dependent phosphorylation of L-homoserine to L-homoserine phosphate. This chain is Homoserine kinase, found in Synechococcus sp. (strain ATCC 27144 / PCC 6301 / SAUG 1402/1) (Anacystis nidulans).